Reading from the N-terminus, the 410-residue chain is Peptidase T (410 aa).

His78 serves as a coordination point for Zn(2+). Asp80 is a catalytic residue. Zn(2+) is bound at residue Asp140. Residue Glu174 is the Proton acceptor of the active site. Positions 175, 197, and 379 each coordinate Zn(2+).

The protein belongs to the peptidase M20B family. Zn(2+) is required as a cofactor.

The protein resides in the cytoplasm. It carries out the reaction Release of the N-terminal residue from a tripeptide.. In terms of biological role, cleaves the N-terminal amino acid of tripeptides. The polypeptide is Peptidase T (Staphylococcus saprophyticus subsp. saprophyticus (strain ATCC 15305 / DSM 20229 / NCIMB 8711 / NCTC 7292 / S-41)).